The chain runs to 144 residues: Large ribosomal subunit protein uL13 (144 aa).

The protein belongs to the universal ribosomal protein uL13 family. As to quaternary structure, part of the 50S ribosomal subunit.

Functionally, this protein is one of the early assembly proteins of the 50S ribosomal subunit, although it is not seen to bind rRNA by itself. It is important during the early stages of 50S assembly. In Legionella pneumophila (strain Paris), this protein is Large ribosomal subunit protein uL13.